A 156-amino-acid polypeptide reads, in one-letter code: Small ribosomal subunit protein uS7 (156 aa).

It belongs to the universal ribosomal protein uS7 family. Part of the 30S ribosomal subunit. Contacts proteins S9 and S11.

One of the primary rRNA binding proteins, it binds directly to 16S rRNA where it nucleates assembly of the head domain of the 30S subunit. Is located at the subunit interface close to the decoding center, probably blocks exit of the E-site tRNA. This is Small ribosomal subunit protein uS7 from Ruegeria pomeroyi (strain ATCC 700808 / DSM 15171 / DSS-3) (Silicibacter pomeroyi).